The following is a 627-amino-acid chain: Siderophore iron transporter ARN1 (627 aa).

Residues 1-70 (MESVHSRDPV…TEIIGSAYNK (70 aa)) lie on the Extracellular side of the membrane. The chain crosses the membrane as a helical span at residues 71-91 (WYLQAILLLSAFICGYGYGLD). At 92-110 (GNIRYIYTGYATSSYSEHS) the chain is on the cytoplasmic side. A helical membrane pass occupies residues 111-131 (LLSTINVINAVVSAASQIIYA). Over 132-135 (RLSD) the chain is Extracellular. The helical transmembrane segment at 136 to 156 (VFGRLYLFISAVILYVVGTII) threads the bilayer. Over 157 to 167 (QSQAYDVQRYA) the chain is Cytoplasmic. The chain crosses the membrane as a helical span at residues 168-188 (AGAIFYNAGYVGVILILLIIL). Residues 189–197 (SDFSSLKWR) lie on the Extracellular side of the membrane. Residues 198 to 218 (LLYQFVPTWPFIINTWIAGNI) form a helical membrane-spanning segment. Topologically, residues 219-231 (TSRANPVVNWSWD) are cytoplasmic. The chain crosses the membrane as a helical span at residues 232 to 252 (VGMWAFIFPLSCVPIVLCMLH). The Extracellular portion of the chain corresponds to 253 to 290 (MQWRARKTPEWHALKGQKSYYQEHGFIKILKQLFWMLD). Residues 291-311 (VVGVLLMGCSLGCILVPLTLA) traverse the membrane as a helical segment. The Cytoplasmic portion of the chain corresponds to 312-323 (GGVKTTWNDSRL). A helical transmembrane segment spans residues 324-344 (IGPFVLGFVLIPILWIWEYRF). The Extracellular portion of the chain corresponds to 345-367 (ARDPILPYRLVKDRAVWSSMGIS). A helical transmembrane segment spans residues 368-388 (FLIDFIYYMAADYLYTVMIVA). Residues 389–398 (VNESVKSATR) are Cytoplasmic-facing. A helical transmembrane segment spans residues 399–419 (IATLSSFVSTVASPFFALLVT). Over 420–424 (RCTRL) the chain is Extracellular. Residues 425–445 (KPFIMFGCALWMVAMGLLYHF) form a helical membrane-spanning segment. The Cytoplasmic portion of the chain corresponds to 446-454 (RGGSQSHSG). Residues 455–475 (IIGALCVWGVGTTLFTYPVTV) form a helical membrane-spanning segment. The Extracellular segment spans residues 476-563 (SVQSAVSHEN…LMNAYKYVQR (88 aa)). The helical transmembrane segment at 564-584 (LETIVALVFCVPLIAFSLCLR) threads the bilayer. Residues 585–627 (DPKLTDTVAVEYIEDGEYVDTKDNDPILDWFEKLPSKFTFKRE) lie on the Cytoplasmic side of the membrane.

The protein belongs to the major facilitator superfamily.

The protein localises to the cell membrane. It is found in the endosome membrane. Involved in the transport of siderophore ferrichrome and so has a role in iron homeostasis. The protein is Siderophore iron transporter ARN1 (ARN1) of Saccharomyces cerevisiae (strain ATCC 204508 / S288c) (Baker's yeast).